Here is a 260-residue protein sequence, read N- to C-terminus: Protein phosphatase 1 regulatory subunit 35 (260 aa).

Residues 1–100 are disordered; that stretch reads MMGFGASALE…PLLVAGAPGD (100 aa). A phosphoserine mark is found at serine 46 and serine 53. A compositionally biased stretch (basic residues) spans 64-76; sequence RKGRRGGSRRGRQ.

Belongs to the PPP1R35 family. Interacts with PPP1CA; this interaction mediates the PPP1CA phosphatase activity inhibition. Interacts with RTTN; this interaction allows the mutual recruitment to the centriole.

It is found in the cytoplasm. The protein resides in the cytoskeleton. It localises to the microtubule organizing center. The protein localises to the centrosome. Its subcellular location is the centriole. During centriole duplication, plays a role in the centriole elongation by promoting the recruitment of the microtubule-binding elongation machinery through its interaction with TTTN, leading to the centriole to centrosome conversion. In addition may play a role in the primary cilia assembly. This Mus musculus (Mouse) protein is Protein phosphatase 1 regulatory subunit 35.